We begin with the raw amino-acid sequence, 392 residues long: NADH dehydrogenase-like protein YjlD (392 aa).

It belongs to the NADH dehydrogenase family. It depends on FAD as a cofactor.

This chain is NADH dehydrogenase-like protein YjlD (yjlD), found in Bacillus subtilis (strain 168).